A 450-amino-acid chain; its full sequence is FAD-linked oxidoreductase ptmO (450 aa).

The region spanning 32 to 203 is the FAD-binding PCMH-type domain; the sequence is PPELPYAIVR…TRFFIRTRPA (172 aa).

This sequence belongs to the oxygen-dependent FAD-linked oxidoreductase family. FAD is required as a cofactor.

It participates in secondary metabolite biosynthesis. In terms of biological role, FAD-linked oxidoreductase; part of the gene cluster that mediates the biosynthesis of the indole diterpenes penitrems. The geranylgeranyl diphosphate (GGPP) synthase ptmG catalyzes the first step in penitrem biosynthesis via conversion of farnesyl pyrophosphate and isopentyl pyrophosphate into geranylgeranyl pyrophosphate (GGPP). Condensation of indole-3-glycerol phosphate with GGPP by the prenyl transferase ptmC then forms 3-geranylgeranylindole (3-GGI). Epoxidation by the FAD-dependent monooxygenase ptmM leads to a epoxidized-GGI that is substrate of the terpene cyclase ptmB for cyclization to yield paspaline. Paspaline is subsequently converted to 13-desoxypaxilline by the cytochrome P450 monooxygenase ptmP, the latter being then converted to paxilline by the cytochrome P450 monooxygenase ptmQ. Paxilline is converted to beta-paxitriol via C-10 ketoreduction by the short-chain dehydrogenase ptmH which can be monoprenylated at the C-20 by the indole diterpene prenyltransferase ptmD. A two-step elimination (acetylation and elimination) process performed by the O-acetyltransferase ptmV and ptmI leads to the production of the prenylated form of penijanthine. The FAD-linked oxidoreductase ptmO then converts the prenylated form of penijanthine into PC-M5 which is in turn transformed into PC-M4 by the aromatic dimethylallyltransferase ptmE. Five sequential oxidative transformations performed by the cytochrome P450 monooxygenases ptmK, ptmU, ptmL, ptmN and ptmJ yield the various penitrem compounds. PtmK, ptmU and ptmM are involved in the formation of the key bicyclic ring of penitrem C via the formation of the intermediates secopenitrem D and penitrem D. PtmL catalyzes the epoxidation of penitrem D and C to yield penitrem B and F, respectively. PtmJ catalyzes the last benzylic hydroxylation to convert penitrem B to prenitrem E and penitrem F to penitrem A. This chain is FAD-linked oxidoreductase ptmO, found in Penicillium ochrochloron.